The following is a 116-amino-acid chain: PTS system cellobiose-specific EIIA component (116 aa).

One can recognise a PTS EIIA type-3 domain in the interval D11 to R109. The active-site Tele-phosphohistidine intermediate is the H85. H85 is modified (phosphohistidine; by HPr). Residue D88 participates in Mg(2+) binding.

In terms of assembly, homotrimer. Mg(2+) serves as cofactor.

The phosphoenolpyruvate-dependent sugar phosphotransferase system (sugar PTS), a major carbohydrate active transport system, catalyzes the phosphorylation of incoming sugar substrates concomitantly with their translocation across the cell membrane. Involved in cellobiose transport with PtcB and CelB. This system can also transport lactose. In Lactococcus lactis subsp. lactis (strain IL1403) (Streptococcus lactis), this protein is PTS system cellobiose-specific EIIA component.